We begin with the raw amino-acid sequence, 198 residues long: NADH-quinone oxidoreductase subunit B 1 (198 aa).

[4Fe-4S] cluster is bound by residues Cys-77, Cys-78, Cys-142, and Cys-172.

Belongs to the complex I 20 kDa subunit family. In terms of assembly, NDH-1 is composed of 14 different subunits. Subunits NuoB, C, D, E, F, and G constitute the peripheral sector of the complex. [4Fe-4S] cluster is required as a cofactor.

It is found in the cell inner membrane. The enzyme catalyses a quinone + NADH + 5 H(+)(in) = a quinol + NAD(+) + 4 H(+)(out). Functionally, NDH-1 shuttles electrons from NADH, via FMN and iron-sulfur (Fe-S) centers, to quinones in the respiratory chain. The immediate electron acceptor for the enzyme in this species is believed to be ubiquinone. Couples the redox reaction to proton translocation (for every two electrons transferred, four hydrogen ions are translocated across the cytoplasmic membrane), and thus conserves the redox energy in a proton gradient. The chain is NADH-quinone oxidoreductase subunit B 1 from Rhodopseudomonas palustris (strain ATCC BAA-98 / CGA009).